Consider the following 506-residue polypeptide: Cysteine--tRNA ligase (506 aa).

Zn(2+) is bound at residue C34. The 'HIGH' region motif lies at 36-46 (PTVYDFAHIGN). C230, H269, and E273 together coordinate Zn(2+). A 'KMSKS' region motif is present at residues 302–306 (KMSKS). ATP is bound at residue K305.

This sequence belongs to the class-I aminoacyl-tRNA synthetase family. As to quaternary structure, monomer. Zn(2+) is required as a cofactor.

The protein localises to the cytoplasm. The enzyme catalyses tRNA(Cys) + L-cysteine + ATP = L-cysteinyl-tRNA(Cys) + AMP + diphosphate. This is Cysteine--tRNA ligase from Brucella suis (strain ATCC 23445 / NCTC 10510).